A 273-amino-acid chain; its full sequence is Rho GTPase-activating protein gacB (273 aa).

Residues 1–192 (MTDQTLRLEN…YLISHFNEIF (192 aa)) enclose the Rho-GAP domain.

The protein resides in the cytoplasm. Its function is as follows. Rho GTPase-activating protein involved in the signal transduction pathway. The chain is Rho GTPase-activating protein gacB (gacB) from Dictyostelium discoideum (Social amoeba).